Here is a 274-residue protein sequence, read N- to C-terminus: Large ribosomal subunit protein uL2 (274 aa).

2 disordered regions span residues 28–53 (APYA…TVRH) and 223–274 (VAMN…RRNK). Residues 39–48 (KSGGRNNNGR) are compositionally biased toward low complexity.

This sequence belongs to the universal ribosomal protein uL2 family. As to quaternary structure, part of the 50S ribosomal subunit. Forms a bridge to the 30S subunit in the 70S ribosome.

One of the primary rRNA binding proteins. Required for association of the 30S and 50S subunits to form the 70S ribosome, for tRNA binding and peptide bond formation. It has been suggested to have peptidyltransferase activity; this is somewhat controversial. Makes several contacts with the 16S rRNA in the 70S ribosome. This chain is Large ribosomal subunit protein uL2, found in Pseudoalteromonas atlantica (strain T6c / ATCC BAA-1087).